The primary structure comprises 261 residues: Chanoclavine-I dehydrogenase easD (261 aa).

Positions 18, 48, 66, 132, 166, 170, and 201 each coordinate NADP(+). Tyr-166 serves as the catalytic Proton donor. The active-site Lowers pKa of active site Tyr is Lys-170.

Belongs to the short-chain dehydrogenases/reductases (SDR) family.

It catalyses the reaction chanoclavine-I + NAD(+) = chanoclavine-I aldehyde + NADH + H(+). It functions in the pathway alkaloid biosynthesis; ergot alkaloid biosynthesis. In terms of biological role, chanoclavine-I dehydrogenase; part of the gene cluster that mediates the biosynthesis of fumiclavanine C, a fungal ergot alkaloid. DmaW catalyzes the first step of ergot alkaloid biosynthesis by condensing dimethylallyl diphosphate (DMAP) and tryptophan to form 4-dimethylallyl-L-tryptophan. The second step is catalyzed by the methyltransferase easF that methylates 4-dimethylallyl-L-tryptophan in the presence of S-adenosyl-L-methionine, resulting in the formation of 4-dimethylallyl-L-abrine. The catalase easC and the FAD-dependent oxidoreductase easE then transform 4-dimethylallyl-L-abrine to chanoclavine-I which is further oxidized by EasD in the presence of NAD(+), resulting in the formation of chanoclavine-I aldehyde. EasA reduces chanoclavine-I aldehyde to dihydrochanoclavine-I aldehyde that spontaneously dehydrates to form 6,8-dimethyl-6,7-didehydroergoline. EasG then catalyzes the reduction of 6,8-dimethyl-6,7-didehydroergoline to form festuclavine. Hydrolysis of festuclavine by easM then leads to the formation of fumigaclavine B which is in turn acetylated by easN to fumigaclavine A. Finally, easL catalyzes the conversion of fumigaclavine A into fumigaclavine C by attaching a dimethylallyl moiety to C-2 of the indole nucleus. The protein is Chanoclavine-I dehydrogenase easD of Aspergillus fumigatus (strain ATCC MYA-4609 / CBS 101355 / FGSC A1100 / Af293) (Neosartorya fumigata).